The chain runs to 292 residues: Probable endonuclease 4 (292 aa).

Residues His71, His111, Glu148, Asp182, His185, His217, Asp230, His232, and Glu262 each coordinate Zn(2+).

It belongs to the AP endonuclease 2 family. It depends on Zn(2+) as a cofactor.

It carries out the reaction Endonucleolytic cleavage to 5'-phosphooligonucleotide end-products.. Endonuclease IV plays a role in DNA repair. It cleaves phosphodiester bonds at apurinic or apyrimidinic (AP) sites, generating a 3'-hydroxyl group and a 5'-terminal sugar phosphate. The polypeptide is Probable endonuclease 4 (Aster yellows witches'-broom phytoplasma (strain AYWB)).